We begin with the raw amino-acid sequence, 162 residues long: MIOREX complex component 11 (162 aa).

Residues 1 to 45 (MLPPTIRISGLAKTLHIPSRSPLQALKGSFILLNKRKFHYSPFIL) constitute a mitochondrion transit peptide. Topologically, residues 46 to 84 (QEKVQSSNHTIRSDTKLWKRLLKITGKQAHQFKDKPFSH) are mitochondrial matrix. Residues 85-105 (IFAFLFLHELSAILPLPIFFF) form a helical membrane-spanning segment. Residues 106-124 (IFHSLDWTPTGLPGEYLQK) are Mitochondrial intermembrane-facing. The chain crosses the membrane as a helical span at residues 125–142 (GSHVAASIFAKLGYNLPL). Residues 143 to 162 (EKVSKTLLDGAAAYAVVKVC) are Mitochondrial matrix-facing.

The protein belongs to the MRX11 family. Associates with the mitochondrial ribosome.

It is found in the mitochondrion. It localises to the mitochondrion inner membrane. Functionally, component of MIOREX complexes, large expressome-like assemblies of ribosomes with factors involved in all the steps of post-transcriptional gene expression. In Schizosaccharomyces pombe (strain 972 / ATCC 24843) (Fission yeast), this protein is MIOREX complex component 11 (mrx11).